A 768-amino-acid chain; its full sequence is Solute carrier family 45 member 4 (768 aa).

Positions 1–32 (MKMAPQNADPESMQVQELSVPLPDPQKAGGAE) are disordered. The next 6 membrane-spanning stretches (helical) occupy residues 63–83 (EFCY…IGLP), 86–106 (YYSL…PLIG), 123–143 (ILAL…GSAI), 155–175 (PIGI…ADAT), 196–216 (LNIH…LGGL), and 233–253 (VLFF…LFSI). Disordered regions lie at residues 259-284 (SPQQ…PAFP) and 379-419 (NEAK…RHAF). Residues S424 and S454 each carry the phosphoserine modification. The segment at 460–489 (DMQKRQRQHRHRNQSGATTSSGDTESEEGE) is disordered. Over residues 473–482 (QSGATTSSGD) the composition is skewed to low complexity. S485 carries the phosphoserine modification. Transmembrane regions (helical) follow at residues 518–538 (TWFS…QVIF), 560–580 (MGCW…ALLQ), 592–612 (VIYV…AMFP), 614–634 (VYVA…ISYC), 666–686 (ILSC…GGVV), and 695–715 (IPMV…FLVI). The segment at 726-768 (EQKGLSSPLAGEGRAGGNSEKPTVLKLTRKEGLQGPVETESVV) is disordered. Residue S732 is modified to Phosphoserine.

The protein belongs to the glycoside-pentoside-hexuronide (GPH) cation symporter transporter (TC 2.A.2) family.

Its subcellular location is the membrane. It catalyses the reaction sucrose(out) + H(+)(out) = sucrose(in) + H(+)(in). Proton-associated sucrose transporter. May be able to transport also glucose and fructose. The sequence is that of Solute carrier family 45 member 4 from Homo sapiens (Human).